We begin with the raw amino-acid sequence, 190 residues long: MGLNDTLVAPRSRGIIDPNTGNPVGANDPFYGAINEELSDKGFLVTSSEALITWARTGSLMWMTFGLACCAVEMMHTSMPRYDAERFGIAPRASPRQSDVMIVAGTLTNKMAPALRKVYDQMPEPRYVISMGSCANGGGYYHYSYSVVRGCDRIVPVDIYVPGCPPTAEALLYGILLLQKKIRRTGTIER.

4 residues coordinate [4Fe-4S] cluster: cysteine 69, cysteine 70, cysteine 134, and cysteine 164.

Belongs to the complex I 20 kDa subunit family. In terms of assembly, NDH-1 is composed of 14 different subunits. Subunits NuoB, C, D, E, F, and G constitute the peripheral sector of the complex. Requires [4Fe-4S] cluster as cofactor.

It is found in the cell inner membrane. The catalysed reaction is a quinone + NADH + 5 H(+)(in) = a quinol + NAD(+) + 4 H(+)(out). Its function is as follows. NDH-1 shuttles electrons from NADH, via FMN and iron-sulfur (Fe-S) centers, to quinones in the respiratory chain. Couples the redox reaction to proton translocation (for every two electrons transferred, four hydrogen ions are translocated across the cytoplasmic membrane), and thus conserves the redox energy in a proton gradient. This is NADH-quinone oxidoreductase subunit B from Chelativorans sp. (strain BNC1).